Consider the following 269-residue polypeptide: Cytochrome c oxidase subunit 3 (269 aa).

Transmembrane regions (helical) follow at residues 21-41 (PWPITVSFALMSFALSLGLTM), 45-65 (IVGNSVLFTSIILVLYSMTMW), 90-110 (GFLLFVVSEILIFAGIFWAYF), 127-147 (VGITAIGATELPLLNTIILLA), 167-187 (ALNGLFITLWLIVIFVVCQYI), 204-224 (VFFAGTGLHFLHMGMLIIMLA), and 247-267 (ILYLHVLDVIWLFLYIVMYWW).

The protein belongs to the cytochrome c oxidase subunit 3 family. In terms of assembly, component of the cytochrome c oxidase (complex IV, CIV), a multisubunit enzyme composed of a catalytic core of 3 subunits and several supernumerary subunits. The complex exists as a monomer or a dimer and forms supercomplexes (SCs) in the inner mitochondrial membrane with ubiquinol-cytochrome c oxidoreductase (cytochrome b-c1 complex, complex III, CIII).

The protein resides in the mitochondrion inner membrane. It carries out the reaction 4 Fe(II)-[cytochrome c] + O2 + 8 H(+)(in) = 4 Fe(III)-[cytochrome c] + 2 H2O + 4 H(+)(out). Component of the cytochrome c oxidase, the last enzyme in the mitochondrial electron transport chain which drives oxidative phosphorylation. The respiratory chain contains 3 multisubunit complexes succinate dehydrogenase (complex II, CII), ubiquinol-cytochrome c oxidoreductase (cytochrome b-c1 complex, complex III, CIII) and cytochrome c oxidase (complex IV, CIV), that cooperate to transfer electrons derived from NADH and succinate to molecular oxygen, creating an electrochemical gradient over the inner membrane that drives transmembrane transport and the ATP synthase. Cytochrome c oxidase is the component of the respiratory chain that catalyzes the reduction of oxygen to water. Electrons originating from reduced cytochrome c in the intermembrane space (IMS) are transferred via the dinuclear copper A center (CU(A)) of subunit 2 and heme A of subunit 1 to the active site in subunit 1, a binuclear center (BNC) formed by heme A3 and copper B (CU(B)). The BNC reduces molecular oxygen to 2 water molecules using 4 electrons from cytochrome c in the IMS and 4 protons from the mitochondrial matrix. The sequence is that of Cytochrome c oxidase subunit 3 (COX3) from Wickerhamomyces canadensis (Yeast).